The following is a 138-amino-acid chain: MAPKAEKKPVAEKAEKTTAAKKTKAEKRPPASKEGGDKKGKKKSKKSVETYKIYIFKVLKQVHPDIGISSKAMSIMNSFINDIFEKLAGESAKLARYNKKPTITSREIQTSVRLVLPGELAKHAVSEGTKAVTKFTSA.

Composition is skewed to basic and acidic residues over residues 1-18 (MAPK…EKTT) and 26-38 (EKRP…GGDK). The segment at 1-46 (MAPKAEKKPVAEKAEKTTAAKKTKAEKRPPASKEGGDKKGKKKSKK) is disordered. Residues K7 and K27 each carry the N6-acetyllysine modification. K134 is covalently cross-linked (Glycyl lysine isopeptide (Lys-Gly) (interchain with G-Cter in ubiquitin)).

This sequence belongs to the histone H2B family. The nucleosome is a histone octamer containing two molecules each of H2A, H2B, H3 and H4 assembled in one H3-H4 heterotetramer and two H2A-H2B heterodimers. The octamer wraps approximately 147 bp of DNA. In terms of processing, can be acetylated to form H2BK6ac and H2BK33ac. Post-translationally, monoubiquitinated to form H2BK143ub1; may give a specific tag for epigenetic transcriptional activation.

It is found in the nucleus. The protein localises to the chromosome. Functionally, core component of nucleosome. Nucleosomes wrap and compact DNA into chromatin, limiting DNA accessibility to the cellular machineries which require DNA as a template. Histones thereby play a central role in transcription regulation, DNA repair, DNA replication and chromosomal stability. DNA accessibility is regulated via a complex set of post-translational modifications of histones, also called histone code, and nucleosome remodeling. The sequence is that of Histone H2B.3 from Triticum aestivum (Wheat).